We begin with the raw amino-acid sequence, 457 residues long: Flavohemoprotein-2 (457 aa).

The Globin domain occupies 2–157 (ALSEDTIKAV…LADLLIKREE (156 aa)). Residue His-106 coordinates heme b. Catalysis depends on charge relay system residues Tyr-116 and Glu-156. Residues 168–456 (GGWRQTRTFR…FEMFGPFKAS (289 aa)) are reductase. The FAD-binding FR-type domain maps to 171–278 (RQTRTFRVEE…APPYGDFFLR (108 aa)). FAD is bound by residues Tyr-210 and 227 to 230 (RQYS). 320-325 (GIGQTP) contributes to the NADP(+) binding site. 449–452 (MFGP) serves as a coordination point for FAD.

The protein belongs to the globin family. Two-domain flavohemoproteins subfamily. In the C-terminal section; belongs to the flavoprotein pyridine nucleotide cytochrome reductase family. As to quaternary structure, monomer. Heme b serves as cofactor. It depends on FAD as a cofactor.

It carries out the reaction 2 nitric oxide + NADPH + 2 O2 = 2 nitrate + NADP(+) + H(+). The enzyme catalyses 2 nitric oxide + NADH + 2 O2 = 2 nitrate + NAD(+) + H(+). Its function is as follows. Flavohemoprotein involved in nitric oxide (NO) detoxification in an aerobic process, termed nitric oxide dioxygenase (NOD) reaction that utilizes O(2) and NAD(P)H to convert NO to nitrate, which protects the protozoan parasite from various noxious nitrogen compounds. Therefore, plays a central role in the inducible response to nitrosative stress. May also be involved in O(2) detoxification. This Giardia intestinalis (strain P15) (Giardia lamblia) protein is Flavohemoprotein-2 (hmpA-2).